Here is a 344-residue protein sequence, read N- to C-terminus: Protein RecA (344 aa).

66–73 (GPESSGKT) contributes to the ATP binding site.

This sequence belongs to the RecA family.

The protein resides in the cytoplasm. Its function is as follows. Can catalyze the hydrolysis of ATP in the presence of single-stranded DNA, the ATP-dependent uptake of single-stranded DNA by duplex DNA, and the ATP-dependent hybridization of homologous single-stranded DNAs. It interacts with LexA causing its activation and leading to its autocatalytic cleavage. The protein is Protein RecA of Methylobacillus flagellatus (strain ATCC 51484 / DSM 6875 / VKM B-1610 / KT).